We begin with the raw amino-acid sequence, 168 residues long: Cell division inhibitor SulA (168 aa).

The ftsZ binding stretch occupies residues 105 to 111 (ALLTGNY). A lon protease binding region spans residues 161-168 (KIHSTLYH).

It belongs to the SulA family. Interacts with FtsZ. Post-translationally, is rapidly cleaved and degraded by the Lon protease once DNA damage is repaired.

Component of the SOS system and an inhibitor of cell division. Accumulation of SulA causes rapid cessation of cell division and the appearance of long, non-septate filaments. In the presence of GTP, binds a polymerization-competent form of FtsZ in a 1:1 ratio, thus inhibiting FtsZ polymerization and therefore preventing it from participating in the assembly of the Z ring. This mechanism prevents the premature segregation of damaged DNA to daughter cells during cell division. The chain is Cell division inhibitor SulA from Pectobacterium carotovorum subsp. carotovorum (strain PC1).